Here is a 987-residue protein sequence, read N- to C-terminus: 110 kDa U5 small nuclear ribonucleoprotein component CLO (987 aa).

Positions 1–54 (MESSLYDEFGNYVGPEIESDRDSDDEVEDEDLQDKHLEENGSDGEQGPGGSNGW) are disordered. Over residues 17–32 (IESDRDSDDEVEDEDL) the composition is skewed to acidic residues. Positions 136–422 (ALVRNVALVG…LGVTLSNSAY (287 aa)) constitute a tr-type G domain. A G1 region spans residues 145–152 (GHLQHGKT). 145–152 (GHLQHGKT) serves as a coordination point for GTP. The G2 stretch occupies residues 189–193 (NISIK). The interval 215–218 (DTPG) is G3. GTP-binding positions include 215–219 (DTPGH) and 269–272 (NKVD). The interval 269–272 (NKVD) is G4. Residues 395 to 397 (YSQ) form a G5 region.

The protein belongs to the TRAFAC class translation factor GTPase superfamily. Classic translation factor GTPase family. Interacts with BRR2A and PRP8A. In terms of tissue distribution, expressed in flower buds, open flowers and siliques. Expressed at low levels in rosettes leaves, cauline leaves and stems.

The protein localises to the nucleus speckle. Splicing factor involved in pre-mRNA splicing and component of the spliceosome. Essential for reproduction. In female gametophyte, is necessary for the egg cell and central cell fate determination and hence reproductive success. Involved in a mechanism that prevents accessory cells from adopting gametic cell fate. Is necessary to restrict LIS expression to interfere with egg-cell specification. Probable component of U5 small nuclear ribonucleoprotein (snRNP) that is required for pre-mRNA splicing. Plays an essential role in female gametogenesis and embryo development. Required for the control of polarized cell growth and cell proliferation during floral organ morphogenesis. The polypeptide is 110 kDa U5 small nuclear ribonucleoprotein component CLO (Arabidopsis thaliana (Mouse-ear cress)).